Consider the following 426-residue polypeptide: uncharacterized protein (426 aa).

This sequence belongs to the serpin family.

This is an uncharacterized protein from Methanosarcina acetivorans (strain ATCC 35395 / DSM 2834 / JCM 12185 / C2A).